Reading from the N-terminus, the 1012-residue chain is MEVTIAGILERDLSEGELAEAIRGLREHGAFRGEGLPAAMSGLLSSCNSRLTSASSRIEGLSLLALAVEESPTDVFVQHCVSWLRSLLQIIQSQDPPRVVSLAVFVLRSLLAHSSALPELSREISTNHIPGLLTSLLGLRRQCLVPALEGIRSCFLSYPRACGSLRGKLTAFLLSLLDAENQQIQEVACQCYSLLPSLGSGFSQGIKHTENWERQIQSVICSLHSVFLQLYQGSETDTARYEGSGTELEFPSVEDDGTHGVLQLARRFTALGQCMRLLLREQFPAPVRVPVSDILSLVCRVVNVSPKNLSWHGEESLKLLLLPRVHSSILEILEATIIACGPRLLPFSAVICRLFPQLLLSWAAVKGITGIPSGQERPYSSLRCSVYRVLETWVTTCGISSGVLQGPMHHSDILLANLLSDITPPTDAIKMSTFVQLGAKKQKVSEVGDDDFQSHRKRDNTANVELCAAALKGLCCVILHCGSVIKEDVHRRLQELSIPLLLRLQQGSDQWLGPYISSDCRKELYRLLLCLTLTPNPKLPAPLHCAIRIFRGGTTEESLQVSRFSTEALAICRILIHPRVPSLQRPLPHLAPRPSVQSDAPTLRPPAALSTFPAMPPANHLPPRPTVPAMSTEPPIPAAVPSPPPEESFGEKPRRAVFIHFDKEEPSDVEISLESDSDDSVVIVPEGLFAKSDSKPEPSPPAVKPPTEEVTEQVAPSAVPSSSTAAPPPPPPPPAPPVCAGPSSAPVPIAEAPPPPQQEVDTVININSSDDEEDGEEDEEEGLYDDEDEEDYYDEEEDEDLEGLEEDDYDYEEDEEGITEEEEEDLEEEGEDDEEEVEDEECLMPDEMQIGSEAEEIPDGIETSSLHEGELEEGPPRLSPVQEDEAVDTGLLMLVESEDREPSGEAPGEGLPESDLTRSPPQPPVLTPPSPPDEPPPMEESDVPPLEEPDLEVAPVAEEPVEETEEKKPEEVTVEKPEPEPEEEEQIADADAMLADFVDCPPDDDKLPEPCT.

10 consecutive short sequence motifs (LXXLL motif) follow at residues 21–25 (AIRGL), 63–67 (LLALA), 107–111 (LRSLL), 129–133 (IPGLL), 216–220 (IQSVI), 223–227 (LHSVF), 317–321 (LKLLL), 415–419 (LANLL), 524–528 (LYRLL), and 529–533 (LCLTL). 2 disordered regions span residues 586 to 651 (PLPH…SFGE) and 684 to 986 (VPEG…EEEQ). 2 stretches are compositionally biased toward pro residues: residues 614–626 (AMPP…PRPT) and 634–646 (PPIP…PPPE). The span at 714-725 (VAPSAVPSSSTA) shows a compositional bias: low complexity. Pro residues predominate over residues 726–739 (APPPPPPPPAPPVC). The segment covering 740–750 (AGPSSAPVPIA) has biased composition (low complexity). Residues 769–844 (SDDEEDGEED…EEVEDEECLM (76 aa)) are compositionally biased toward acidic residues. Pro residues predominate over residues 920–935 (PPQPPVLTPPSPPDEP). Acidic residues predominate over residues 936-951 (PPMEESDVPPLEEPDL). The segment covering 965-979 (EEKKPEEVTVEKPEP) has biased composition (basic and acidic residues).

It belongs to the RIX1/PELP1 family. In terms of assembly, component of some MLL1/MLL complex. Forms a signaling complex with SRC and estrogen receptors. Expressed in oocyte.

It localises to the nucleus. Its subcellular location is the cytoplasm. Coactivator of estrogen receptor-mediated transcription and a corepressor of other nuclear hormone receptors and sequence-specific transcription factors. Regulates oocyte maturation. Enhances androgen receptor (AR)-mediated transcription in a SRC-dependent manner. The protein is Proline-, glutamic acid- and leucine-rich protein 1 (pelp1) of Xenopus laevis (African clawed frog).